We begin with the raw amino-acid sequence, 133 residues long: Classical arabinogalactan protein 5 (133 aa).

Positions 1 to 21 (MASKSVVVFLFLALVASSVVA) are cleaved as a signal peptide. Position 22 is a pyrrolidone carboxylic acid (glutamine 22). A disordered region spans residues 23 to 110 (APGPAPTISP…QSPLSGSPNA (88 aa)). Residues 25-37 (GPAPTISPLPATP) show a composition bias toward pro residues. Residues 38-48 (TPSQSPRATAP) show a composition bias toward low complexity. Over residues 49 to 81 (APSPSANPPPSAPTTAPPVSQPPTESPPAPPTS) the composition is skewed to pro residues. Asparagine 109 carries GPI-anchor amidated asparagine lipidation. Positions 110 to 133 (AAAVSRVSLVGTFAGVAVIAALLL) are cleaved as a propeptide — removed in mature form.

Belongs to the classical AGP family. Post-translationally, O-glycosylated on the hydroxyproline residues. Expressed at a low level in flowers and siliques.

The protein resides in the cell membrane. Functionally, proteoglycan that seems to be implicated in diverse developmental roles such as differentiation, cell-cell recognition, embryogenesis and programmed cell death. In Arabidopsis thaliana (Mouse-ear cress), this protein is Classical arabinogalactan protein 5 (AGP5).